Reading from the N-terminus, the 287-residue chain is Pyridoxal kinase PdxY (287 aa).

Substrate contacts are provided by residues serine 9 and methionine 44 to glutamine 45. The ATP site is built by aspartate 111, alanine 142, glutamate 147, and lysine 180. Aspartate 221 serves as a coordination point for substrate.

The protein belongs to the pyridoxine kinase family. PdxY subfamily. Homodimer. Requires Mg(2+) as cofactor.

It catalyses the reaction pyridoxal + ATP = pyridoxal 5'-phosphate + ADP + H(+). The protein operates within cofactor metabolism; pyridoxal 5'-phosphate salvage; pyridoxal 5'-phosphate from pyridoxal: step 1/1. In terms of biological role, pyridoxal kinase involved in the salvage pathway of pyridoxal 5'-phosphate (PLP). Catalyzes the phosphorylation of pyridoxal to PLP. The polypeptide is Pyridoxal kinase PdxY (Burkholderia mallei (strain ATCC 23344)).